The following is a 214-amino-acid chain: Large ribosomal subunit protein bL25 (214 aa).

Positions Val179–Glu214 are disordered. Residues Ala188 to Glu202 are compositionally biased toward acidic residues.

This sequence belongs to the bacterial ribosomal protein bL25 family. CTC subfamily. In terms of assembly, part of the 50S ribosomal subunit; part of the 5S rRNA/L5/L18/L25 subcomplex. Contacts the 5S rRNA. Binds to the 5S rRNA independently of L5 and L18.

In terms of biological role, this is one of the proteins that binds to the 5S RNA in the ribosome where it forms part of the central protuberance. This Staphylococcus carnosus (strain TM300) protein is Large ribosomal subunit protein bL25.